The following is a 136-amino-acid chain: UPF0299 membrane protein PM0880 (136 aa).

4 helical membrane passes run 5–25, 29–49, 67–87, and 92–112; these read IVDLARSCGILYLMLFIGEWI, LNIGIPASIWGLLLLFLGLTF, YMALLFVPVSVGVIKYADVLF, and VLLLPNIVSTFLTLIVVGLLS.

It belongs to the UPF0299 family.

The protein resides in the cell inner membrane. The chain is UPF0299 membrane protein PM0880 from Pasteurella multocida (strain Pm70).